The following is a 481-amino-acid chain: ATP synthase subunit beta, chloroplastic (481 aa).

161-168 (GGAGVGKT) contributes to the ATP binding site.

It belongs to the ATPase alpha/beta chains family. F-type ATPases have 2 components, CF(1) - the catalytic core - and CF(0) - the membrane proton channel. CF(1) has five subunits: alpha(3), beta(3), gamma(1), delta(1), epsilon(1). CF(0) has four main subunits: a(1), b(1), b'(1) and c(9-12).

It localises to the plastid. The protein resides in the chloroplast thylakoid membrane. It carries out the reaction ATP + H2O + 4 H(+)(in) = ADP + phosphate + 5 H(+)(out). Produces ATP from ADP in the presence of a proton gradient across the membrane. The catalytic sites are hosted primarily by the beta subunits. The protein is ATP synthase subunit beta, chloroplastic of Mesostigma viride (Green alga).